The chain runs to 162 residues: MVSLEEIPLIAIVRIRGRVNVKPEIRRTLEMLHLNRKFWATLVPLTDSYKGMIHRVKDYSTYGEIDGPTLLALLRERGELKMGGSLSDEWLSSNTDFSSIEELAEALLSKRVYLHKLGWIKPYFRLHPPKGGFKRPTKRAWNDGGELGYRGKEINTLIRRMI.

Belongs to the universal ribosomal protein uL30 family. In terms of assembly, part of the 50S ribosomal subunit.

This is Large ribosomal subunit protein uL30 from Korarchaeum cryptofilum (strain OPF8).